We begin with the raw amino-acid sequence, 169 residues long: Disulfide bond formation protein B (169 aa).

At 1-14 (MMRFLNHCSQGRSA) the chain is on the cytoplasmic side. Residues 15-31 (WLLMILTALILESSALY) form a helical membrane-spanning segment. At 32 to 49 (FQHVMKLQPCVMCIYERV) the chain is on the periplasmic side. Residues Cys41 and Cys44 are joined by a disulfide bond. The chain crosses the membrane as a helical span at residues 50–65 (ALFGVLSAGILGVIAP). The Cytoplasmic portion of the chain corresponds to 66–71 (KTPLRW). A helical transmembrane segment spans residues 72 to 89 (LAIILWIYSAWGGLQLAW). Over 90–144 (QHTMMQLHPSPFNTCDFFVNFPSWLALNQWLPSVFEATGDCSVRQWQFLTLEMPQ) the chain is Periplasmic. Cys104 and Cys130 form a disulfide bridge. The helical transmembrane segment at 145 to 163 (WLVGIFAAYLVVAALVLIS) threads the bilayer. Over 164-169 (QFFSRK) the chain is Cytoplasmic.

This sequence belongs to the DsbB family.

The protein resides in the cell inner membrane. Required for disulfide bond formation in some periplasmic proteins. Acts by oxidizing the DsbA protein. The sequence is that of Disulfide bond formation protein B from Photorhabdus laumondii subsp. laumondii (strain DSM 15139 / CIP 105565 / TT01) (Photorhabdus luminescens subsp. laumondii).